Here is a 158-residue protein sequence, read N- to C-terminus: 2-C-methyl-D-erythritol 2,4-cyclodiphosphate synthase (158 aa).

Residues aspartate 9 and histidine 11 each contribute to the a divalent metal cation site. Residues 9 to 11 and 35 to 36 each bind 4-CDP-2-C-methyl-D-erythritol 2-phosphate; these read DVH and HS. An a divalent metal cation-binding site is contributed by histidine 43. Residues 57 to 59, 62 to 66, 101 to 107, 133 to 136, phenylalanine 140, and arginine 143 each bind 4-CDP-2-C-methyl-D-erythritol 2-phosphate; these read DIG, FPDTD, AQKPKMA, and TTTE.

It belongs to the IspF family. As to quaternary structure, homotrimer. A divalent metal cation is required as a cofactor.

The enzyme catalyses 4-CDP-2-C-methyl-D-erythritol 2-phosphate = 2-C-methyl-D-erythritol 2,4-cyclic diphosphate + CMP. It participates in isoprenoid biosynthesis; isopentenyl diphosphate biosynthesis via DXP pathway; isopentenyl diphosphate from 1-deoxy-D-xylulose 5-phosphate: step 4/6. Functionally, involved in the biosynthesis of isopentenyl diphosphate (IPP) and dimethylallyl diphosphate (DMAPP), two major building blocks of isoprenoid compounds. Catalyzes the conversion of 4-diphosphocytidyl-2-C-methyl-D-erythritol 2-phosphate (CDP-ME2P) to 2-C-methyl-D-erythritol 2,4-cyclodiphosphate (ME-CPP) with a corresponding release of cytidine 5-monophosphate (CMP). The chain is 2-C-methyl-D-erythritol 2,4-cyclodiphosphate synthase from Bacillus velezensis (strain DSM 23117 / BGSC 10A6 / LMG 26770 / FZB42) (Bacillus amyloliquefaciens subsp. plantarum).